The sequence spans 63 residues: Large ribosomal subunit protein uL29 (63 aa).

The protein belongs to the universal ribosomal protein uL29 family.

The polypeptide is Large ribosomal subunit protein uL29 (Christiangramia forsetii (strain DSM 17595 / CGMCC 1.15422 / KT0803) (Gramella forsetii)).